The chain runs to 603 residues: ATP-dependent lipid A-core flippase (603 aa).

Transmembrane regions (helical) follow at residues 20-40 (LGYV…FLIF), 79-99 (LVYA…LGSF), 170-190 (VFLF…MLAI), and 269-289 (PMLQ…VLWL). One can recognise an ABC transmembrane type-1 domain in the interval 31–324 (LLSIVGFLIF…LSEVSSTVQR (294 aa)). An ABC transporter domain is found at 356 to 592 (LEVRNLSFRY…NGHYARLHAM (237 aa)). An ATP-binding site is contributed by 390-397 (GRSGSGKS).

It belongs to the ABC transporter superfamily. Lipid exporter (TC 3.A.1.106) family. Homodimer.

It is found in the cell inner membrane. The catalysed reaction is ATP + H2O + lipid A-core oligosaccharideSide 1 = ADP + phosphate + lipid A-core oligosaccharideSide 2.. In terms of biological role, involved in lipopolysaccharide (LPS) biosynthesis. Translocates lipid A-core from the inner to the outer leaflet of the inner membrane. Transmembrane domains (TMD) form a pore in the inner membrane and the ATP-binding domain (NBD) is responsible for energy generation. The protein is ATP-dependent lipid A-core flippase of Pseudomonas aeruginosa (strain ATCC 15692 / DSM 22644 / CIP 104116 / JCM 14847 / LMG 12228 / 1C / PRS 101 / PAO1).